The primary structure comprises 31 residues: Cytochrome b6-f complex subunit 6 (31 aa).

Residues 3 to 23 (LIIGYIILLACAFGLAAGLYF) form a helical membrane-spanning segment.

The protein belongs to the PetL family. In terms of assembly, the 4 large subunits of the cytochrome b6-f complex are cytochrome b6, subunit IV (17 kDa polypeptide, PetD), cytochrome f and the Rieske protein, while the 4 small subunits are PetG, PetL, PetM and PetN. The complex functions as a dimer.

It localises to the plastid. It is found in the chloroplast thylakoid membrane. Component of the cytochrome b6-f complex, which mediates electron transfer between photosystem II (PSII) and photosystem I (PSI), cyclic electron flow around PSI, and state transitions. PetL is important for photoautotrophic growth as well as for electron transfer efficiency and stability of the cytochrome b6-f complex. This Guillardia theta (Cryptophyte) protein is Cytochrome b6-f complex subunit 6.